Consider the following 322-residue polypeptide: Short-chain dehydrogenase TIC 32, chloroplastic (322 aa).

NADP(+) contacts are provided by residues 36–42 (GASSGIG), 88–89 (DL), Asn-115, and Thr-136. Position 170 (Ser-170) interacts with substrate. Residue Tyr-192 is the Proton acceptor of the active site. The segment at 298 to 314 (DTELAKKVWDFSTKLTD) is interaction with calmodulin.

The protein belongs to the short-chain dehydrogenases/reductases (SDR) family. In terms of assembly, part of the Tic complex. Interacts with TIC110. In terms of tissue distribution, expressed in leaves and roots.

The protein localises to the plastid. The protein resides in the chloroplast inner membrane. Functionally, involved in protein precursor import into chloroplasts. Part of the redox regulon consisting of TIC32, TIC 55 and TIC62. This is Short-chain dehydrogenase TIC 32, chloroplastic from Arabidopsis thaliana (Mouse-ear cress).